A 269-amino-acid polypeptide reads, in one-letter code: MKITSISVQQKNKERYNIFIDEKYNFSVDEEVLARFQLMKGKVLTEAEIEEIKQADMVRKGLNKAINFLSHRVRSEKEIRDYLKKQEMEPFAIDEILKKLADMDYINDVEFAELYTKTQIKTTLKGPRTIERELVEKGLTREIISQVIEEYSDENQLENATKQAMKIMKRNNKSAKKMLQQKITTDLIQKGYSSEVAKAASLEATNELDMADEADILQKQIEKTMRKNKRYKPSVAKQKTITSLMQKGFSYDTIQSYLTENEISFEEEE.

This sequence belongs to the RecX family.

It localises to the cytoplasm. Modulates RecA activity. The chain is Regulatory protein RecX from Listeria welshimeri serovar 6b (strain ATCC 35897 / DSM 20650 / CCUG 15529 / CIP 8149 / NCTC 11857 / SLCC 5334 / V8).